We begin with the raw amino-acid sequence, 64 residues long: Potassium channel toxin alpha-KTx J123 (64 aa).

Positions 1–21 (MNKVYLVAVLVLFLALTINES) are cleaved as a signal peptide. Intrachain disulfides connect cysteine 30–cysteine 52, cysteine 37–cysteine 60, and cysteine 41–cysteine 62.

This sequence belongs to the short scorpion toxin superfamily. Potassium channel inhibitor family. Alpha-KTx 11 subfamily. As to expression, expressed by the venom gland.

The protein localises to the secreted. Its function is as follows. This recombinant toxin inhibits mammalian voltage-gated potassium channels Kv1.3/KCNA3 (IC(50)=0.79 nM) and Kv1.2/KCNA2 (IC(50)=26.4 nM). The chain is Potassium channel toxin alpha-KTx J123 from Olivierus martensii (Manchurian scorpion).